A 297-amino-acid polypeptide reads, in one-letter code: MAELTALESLIEMGFPRGRAEKALALTGNQGIEAAMDWLMEHEDDPDVDEPLETPLSHVLGREPTPSEQVGPEGSGSAAGESRPILTEEERQEQTKRMLELVAQKQREREEREEREALEREKQRRRQGQELSVARQKLQEDEMRRAAEERRREKAEELAARQRVREKIERDKAERAKKYGGSVGSRSSPPATDPGPVPSSPSQEPPTKREYDQCRIQVRLPDGTSLTQTFRAREQLAAVRLYVELHRGEEPGQDQDPVQLLSGFPRRAFSEADMERPLQELGLVPSAVLIVAKKCPS.

At Ala-2 the chain carries N-acetylalanine. Residues Ala-2–His-42 form the UBA domain. Residues Trp-38–Cys-214 form a disordered region. Acidic residues predominate over residues His-42–Leu-52. Positions Glu-43–Ser-297 are interaction with BRCA1. Basic and acidic residues-rich tracts occupy residues Leu-86–Lys-122 and Lys-137–Lys-177. Ser-199 carries the post-translational modification Phosphoserine. Ser-200 bears the Phosphoserine; by MAPK12 mark. 2 positions are modified to phosphothreonine: Thr-207 and Thr-229. The 83-residue stretch at Arg-209 to Val-291 folds into the UBX domain. At Ser-270 the chain carries Phosphoserine.

In terms of assembly, interacts with MAVS; this interaction prevents MAVS oligomerization and thus disrupts the RLR signaling pathway. Interacts with CUL1; this interaction inhibits CUL1-mediated degradation of NF-kappa-B inhibitors. Interacts with BIRC2/c-IAP1; this interaction prevents TNFalpha-stimulated RIP1 ubiquitination and subsequent NF-kappa-B activation. Component of a complex required to couple retrotranslocation, ubiquitination and deglycosylation composed of NGLY1, SAKS1, AMFR, VCP and RAD23B. Interacts with HOMER2. Interacts directly with VCP. Interacts with BRCA1 and BARD1; interaction takes place when BRCA1 is not autoubiquitinated but is strongly enhanced in the presence of autoubiquitinated BRCA1.

It is found in the cytoplasm. In terms of biological role, ubiquitin-binding protein that plays a role in the modulation of innate immune response. Blocks both the RIG-I-like receptors (RLR) and NF-kappa-B pathways. Following viral infection, UBXN1 is induced and recruited to the RLR component MAVS. In turn, interferes with MAVS oligomerization, and disrupts the MAVS/TRAF3/TRAF6 signalosome. This function probably serves as a brake to prevent excessive RLR signaling. Interferes with the TNFalpha-triggered NF-kappa-B pathway by interacting with cellular inhibitors of apoptosis proteins (cIAPs) and thereby inhibiting their recruitment to TNFR1. Also prevents the activation of NF-kappa-B by associating with CUL1 and thus inhibiting NF-kappa-B inhibitor alpha/NFKBIA degradation that remains bound to NF-kappa-B. Interacts with the BRCA1-BARD1 heterodimer and regulates its activity. Specifically binds 'Lys-6'-linked polyubiquitin chains. Interaction with autoubiquitinated BRCA1 leads to the inhibition of the E3 ubiquitin-protein ligase activity of the BRCA1-BARD1 heterodimer. Component of a complex required to couple deglycosylation and proteasome-mediated degradation of misfolded proteins in the endoplasmic reticulum that are retrotranslocated in the cytosol. The polypeptide is UBX domain-containing protein 1 (Ubxn1) (Mus musculus (Mouse)).